Reading from the N-terminus, the 359-residue chain is UPF0283 membrane protein RHECIAT_CH0002430 (359 aa).

The tract at residues 1–50 (MSKPPSDPPRRPPAAFAYEDEASEPRNSGRQQQGRRKPESFSENIVVTPD) is disordered. 2 consecutive transmembrane segments (helical) span residues 77 to 97 (FGKIAAGAFGILLSLGLGLWT) and 111 to 131 (LGYAALGVLAIGILAVLALVI).

Belongs to the UPF0283 family.

The protein resides in the cell inner membrane. This is UPF0283 membrane protein RHECIAT_CH0002430 from Rhizobium etli (strain CIAT 652).